Consider the following 154-residue polypeptide: Superoxide dismutase [Cu-Zn] (154 aa).

The Cu cation site is built by H45, H47, and H62. Residues C56 and C146 are joined by a disulfide bond. 4 residues coordinate Zn(2+): H62, H70, H79, and D82. H120 contacts Cu cation.

Belongs to the Cu-Zn superoxide dismutase family. In terms of assembly, homodimer. It depends on Cu cation as a cofactor. Zn(2+) serves as cofactor.

The protein resides in the cytoplasm. The catalysed reaction is 2 superoxide + 2 H(+) = H2O2 + O2. Destroys radicals which are normally produced within the cells and which are toxic to biological systems. This chain is Superoxide dismutase [Cu-Zn], found in Bombyx mori (Silk moth).